A 717-amino-acid chain; its full sequence is Ribosomal RNA large subunit methyltransferase K/L (717 aa).

The THUMP domain occupies 44 to 155 (DAYKVCIYSY…KQFVNVFLCL (112 aa)).

The protein belongs to the methyltransferase superfamily. RlmKL family.

The protein localises to the cytoplasm. The enzyme catalyses guanosine(2445) in 23S rRNA + S-adenosyl-L-methionine = N(2)-methylguanosine(2445) in 23S rRNA + S-adenosyl-L-homocysteine + H(+). It carries out the reaction guanosine(2069) in 23S rRNA + S-adenosyl-L-methionine = N(2)-methylguanosine(2069) in 23S rRNA + S-adenosyl-L-homocysteine + H(+). Specifically methylates the guanine in position 2445 (m2G2445) and the guanine in position 2069 (m7G2069) of 23S rRNA. This chain is Ribosomal RNA large subunit methyltransferase K/L, found in Francisella tularensis subsp. holarctica (strain FTNF002-00 / FTA).